The primary structure comprises 230 residues: Tol-Pal system protein TolQ (230 aa).

3 helical membrane passes run leucine 16–isoleucine 36, tyrosine 139–valine 159, and isoleucine 171–alanine 191.

It belongs to the ExbB/TolQ family. The Tol-Pal system is composed of five core proteins: the inner membrane proteins TolA, TolQ and TolR, the periplasmic protein TolB and the outer membrane protein Pal. They form a network linking the inner and outer membranes and the peptidoglycan layer.

It localises to the cell inner membrane. Its function is as follows. Part of the Tol-Pal system, which plays a role in outer membrane invagination during cell division and is important for maintaining outer membrane integrity. Required, with TolR, for the proton motive force-dependent activation of TolA and for TolA-Pal interaction. The sequence is that of Tol-Pal system protein TolQ from Escherichia coli O157:H7.